The sequence spans 490 residues: GTPase Der (490 aa).

2 EngA-type G domains span residues proline 3–valine 166 and isoleucine 203–threonine 376. GTP is bound by residues glycine 9–serine 16, aspartate 56–isoleucine 60, asparagine 118–aspartate 121, glycine 209–serine 216, aspartate 256–valine 260, and asparagine 321–aspartate 324. The KH-like domain maps to arginine 377–glutamate 461.

It belongs to the TRAFAC class TrmE-Era-EngA-EngB-Septin-like GTPase superfamily. EngA (Der) GTPase family. As to quaternary structure, associates with the 50S ribosomal subunit.

GTPase that plays an essential role in the late steps of ribosome biogenesis. In Salmonella choleraesuis (strain SC-B67), this protein is GTPase Der.